We begin with the raw amino-acid sequence, 334 residues long: Cytoskeleton protein RodZ (334 aa).

Over 1–111 (MNTEATHDQN…LGKRRKKRDG (111 aa)) the chain is Cytoplasmic. The region spanning 19 to 71 (LRNAREQLGLSQQAVAERLCLKVSTVRDIEEDKAPSDLASTFLRGYIRSYARL) is the HTH cro/C1-type domain. A DNA-binding region (H-T-H motif) is located at residues 30–49 (QQAVAERLCLKVSTVRDIEE). The helical; Signal-anchor for type II membrane protein transmembrane segment at 112 to 132 (WLMSFTWLVLFVVVGLTGAWW) threads the bilayer. Residues 133–334 (WQNHKAQQEE…TLNAEPTPAQ (202 aa)) lie on the Periplasmic side of the membrane. Disordered regions lie at residues 155–207 (NADK…ATQN) and 221–241 (ATSA…SQAG). The span at 176 to 207 (TTPAQTAPAPATPVDSTAATQTPAATATATQN) shows a compositional bias: low complexity.

The protein belongs to the RodZ family.

It localises to the cell inner membrane. Functionally, cytoskeletal protein that is involved in cell-shape control through regulation of the length of the long axis. The chain is Cytoskeleton protein RodZ from Salmonella schwarzengrund (strain CVM19633).